Here is a 585-residue protein sequence, read N- to C-terminus: GRR1-like protein 1 (585 aa).

In terms of domain architecture, F-box spans 1 to 48 (MGLRFPPKVLEHILSFIDSNEDRNSVSLVCKSWFETERKTRKRVFVGN). Lys70 serves as a coordination point for 1D-myo-inositol hexakisphosphate. The interval 77–78 (DY) is interaction with auxin-responsive proteins. 1D-myo-inositol hexakisphosphate contacts are provided by residues 109–110 (KR) and Arg340. The tract at residues 343–348 (PSEPDL) is interaction with auxin-responsive proteins. 397 to 399 (CFR) is a 1D-myo-inositol hexakisphosphate binding site. Positions 401-405 (CVIEP) are interaction with auxin-responsive proteins. Arg432 contacts 1D-myo-inositol hexakisphosphate. Residues 460–461 (AF) are interaction with auxin-responsive proteins. Residues 480–481 (KK) and Arg505 each bind 1D-myo-inositol hexakisphosphate.

As to quaternary structure, part of a SCF (SKP1-cullin-F-box) protein ligase complex. Interacts with CUL1, SKP1A/ASK1 and SKP1B/ASK2. Interacts with Aux/IAA proteins (IAA7 and IAA12) in an auxin-dependent manner. In terms of tissue distribution, ubiquitous.

The protein resides in the nucleus. It participates in protein modification; protein ubiquitination. In terms of biological role, component of SCF(ASK-cullin-F-box) E3 ubiquitin ligase complexes, which may mediate the ubiquitination and subsequent proteasomal degradation of target proteins. Auxin receptor that mediates Aux/IAA proteins proteasomal degradation and auxin-regulated transcription. Involved in embryogenesis regulation by auxin. Confers sensitivity to the virulent bacterial pathogen P.syringae. Mediates glucose repression in yeast. This is GRR1-like protein 1 (GRH1) from Arabidopsis thaliana (Mouse-ear cress).